Consider the following 170-residue polypeptide: MIIERLVGNLRDLNPLDFNVDHVDLEWFETRKKIARFKTRQGKDIAIRLKDAPKLGLSQGDILFKEEKEIIAVNILDSEVIHIQAKSVAEVAKICYEIGNRHAALYYGESQFEFKTPFEKPTLALLEKLGVQNRVLSSKLDSKERLTVSMPHSEPNFKVSLASDFKVVMK.

It belongs to the UreE family.

It localises to the cytoplasm. Functionally, involved in urease metallocenter assembly. Binds nickel. Probably functions as a nickel donor during metallocenter assembly. This Helicobacter pylori (strain HPAG1) protein is Urease accessory protein UreE.